We begin with the raw amino-acid sequence, 516 residues long: Cyclic AMP response element-binding protein A (516 aa).

A phosphoserine mark is found at S75, S79, and S82. 3 disordered regions span residues 213-237 (KDEPMSPDSSCPASPTSQASSSQHQ), 294-338 (KSEK…HLFA), and 353-408 (PAGG…KGST). The span at 221 to 237 (SSCPASPTSQASSSQHQ) shows a compositional bias: low complexity. Residues 361 to 392 (RVSRTAASITRSSSGSASASGSSTSSTVTTTR) are compositionally biased toward low complexity. Residues 441-504 (SLKKIRRKIK…ANLLSQLHKL (64 aa)) form the bZIP domain. The segment at 443–463 (KKIRRKIKNKISAQESRRKKK) is basic motif. A leucine-zipper region spans residues 469-476 (LERRVEIL).

This sequence belongs to the bZIP family. May bind DNA as heterodimers with other bZIP proteins. In terms of tissue distribution, in all cell types examined, including developing salivary gland in embryos and in adults, brain and optic lobe cell bodies, salivary gland, midgut epithelial cells of the cardia, female ovarian columnar follicle cells and male seminal vesicle, ejaculatory duct, and ejaculatory bulb.

It is found in the nucleus. Functionally, transcriptional activator. Binds to fat body-specific enhancers of alcohol dehydrogenase (ADH) and yolk protein genes. BBF-2 may play a role in fat body gene expression. It binds the consensus sequence 5'-T[AC]NACGTAN[TG]C-3'. The protein is Cyclic AMP response element-binding protein A (CrebA) of Drosophila melanogaster (Fruit fly).